A 251-amino-acid chain; its full sequence is 3-deoxy-manno-octulosonate cytidylyltransferase (251 aa).

This sequence belongs to the KdsB family.

Its subcellular location is the cytoplasm. The catalysed reaction is 3-deoxy-alpha-D-manno-oct-2-ulosonate + CTP = CMP-3-deoxy-beta-D-manno-octulosonate + diphosphate. The protein operates within nucleotide-sugar biosynthesis; CMP-3-deoxy-D-manno-octulosonate biosynthesis; CMP-3-deoxy-D-manno-octulosonate from 3-deoxy-D-manno-octulosonate and CTP: step 1/1. Its pathway is bacterial outer membrane biogenesis; lipopolysaccharide biosynthesis. In terms of biological role, activates KDO (a required 8-carbon sugar) for incorporation into bacterial lipopolysaccharide in Gram-negative bacteria. The chain is 3-deoxy-manno-octulosonate cytidylyltransferase from Rhizobium etli (strain CIAT 652).